A 554-amino-acid polypeptide reads, in one-letter code: Glucose-6-phosphate isomerase (554 aa).

The Proton donor role is filled by Glu-358. Residues His-389 and Lys-515 contribute to the active site.

This sequence belongs to the GPI family.

It localises to the cytoplasm. It catalyses the reaction alpha-D-glucose 6-phosphate = beta-D-fructose 6-phosphate. Its pathway is carbohydrate biosynthesis; gluconeogenesis. It participates in carbohydrate degradation; glycolysis; D-glyceraldehyde 3-phosphate and glycerone phosphate from D-glucose: step 2/4. Functionally, catalyzes the reversible isomerization of glucose-6-phosphate to fructose-6-phosphate. The protein is Glucose-6-phosphate isomerase of Mycobacterium leprae (strain Br4923).